A 326-amino-acid polypeptide reads, in one-letter code: tRNA-modifying protein YgfZ (326 aa).

2 residues coordinate folate: Trp27 and Trp189.

Belongs to the tRNA-modifying YgfZ family.

The protein resides in the cytoplasm. Its function is as follows. Folate-binding protein involved in regulating the level of ATP-DnaA and in the modification of some tRNAs. It is probably a key factor in regulatory networks that act via tRNA modification, such as initiation of chromosomal replication. This is tRNA-modifying protein YgfZ from Salmonella arizonae (strain ATCC BAA-731 / CDC346-86 / RSK2980).